The sequence spans 138 residues: Ribulose bisphosphate carboxylase small subunit (138 aa).

It belongs to the RuBisCO small chain family. As to quaternary structure, heterohexadecamer of 8 large and 8 small subunits.

Its subcellular location is the plastid. It localises to the chloroplast. Its function is as follows. RuBisCO catalyzes two reactions: the carboxylation of D-ribulose 1,5-bisphosphate, the primary event in carbon dioxide fixation, as well as the oxidative fragmentation of the pentose substrate in the photorespiration process. Both reactions occur simultaneously and in competition at the same active site. Although the small subunit is not catalytic it is essential for maximal activity. In Pyropia haitanensis (Red seaweed), this protein is Ribulose bisphosphate carboxylase small subunit.